The sequence spans 601 residues: MGAAGDLPYSVLADFYERIESTSSRLAMTDYLVALFKKTPPEVIDKVVYLTQGQLRPDYEGVELGVAEKLALRALAKASGRHLKDVEDLYKKTGDIGAVAEKLLTAPGGGLLEFFGTPVQKKELTVSQVYSALMKIAQASGEGAQETKVNTLVALLQDAKPKEARYILRTVLGRLRLGIADMTILDALAAAFAGSKAARDVIERAYTKHPDLGYIAKLLATKGLDAVASLKIEVGIPVLPMLAERLSDPAEILEKLGGKCLAEYKYDGERVQAHKSGDKVLLFSRRLENITHHYPDVVEYVKRLKVREAIVEGEIVAYNPDTGEMLPFQELMHRRRKYDVEKAMKEYPVRVYLFDVIYMDGEELIEKPLDQRRLILEKIVPEGDEDILLSTAKVVGDAKDLLHFFEQAISEGCEGVMCKSIGPGSIYQMGARGWLWIKFKRDYRMEMTDTVDLVVVGGFHGRGKRAGTYGALLMAAYDPETDTFKTVCKVGTGFTDEDLAKLPELLDPYKIPHRHPRVFSKIEADVWFVPAVVLEIIGAEITLSPLHTCALNKLEEGAGLAIRFPRFTGRYRFDKKPEQATTESELIEMYKSQKKTALQQS.

An ATP-binding site is contributed by Glu-263. Lys-265 (N6-AMP-lysine intermediate) is an active-site residue. The ATP site is built by Arg-270, Arg-285, Glu-314, Phe-354, Arg-432, and Lys-438.

The protein belongs to the ATP-dependent DNA ligase family. It depends on Mg(2+) as a cofactor.

It carries out the reaction ATP + (deoxyribonucleotide)n-3'-hydroxyl + 5'-phospho-(deoxyribonucleotide)m = (deoxyribonucleotide)n+m + AMP + diphosphate.. In terms of biological role, DNA ligase that seals nicks in double-stranded DNA during DNA replication, DNA recombination and DNA repair. The polypeptide is DNA ligase 2 (Thermofilum pendens (strain DSM 2475 / Hrk 5)).